The following is a 492-amino-acid chain: Catalase (492 aa).

Residues H65 and N138 contribute to the active site. Y348 provides a ligand contact to heme.

Belongs to the catalase family. In terms of assembly, homotetramer. Heme is required as a cofactor.

The protein resides in the cytoplasm. Its subcellular location is the cytosol. It is found in the peroxisome matrix. It carries out the reaction 2 H2O2 = O2 + 2 H2O. In terms of biological role, catalyzes the degradation of hydrogen peroxide (H(2)O(2)) generated by peroxisomal oxidases to water and oxygen, thereby protecting cells from the toxic effects of hydrogen peroxide. This is Catalase from Vigna radiata var. radiata (Mung bean).